A 480-amino-acid chain; its full sequence is Glutamate--tRNA ligase (480 aa).

The 'HIGH' region signature appears at 21-31 (PSPTGYLHVGG). Positions 110, 112, 137, and 139 each coordinate Zn(2+). Residues 248–252 (KLSKR) carry the 'KMSKS' region motif. Lys-251 lines the ATP pocket.

This sequence belongs to the class-I aminoacyl-tRNA synthetase family. Glutamate--tRNA ligase type 1 subfamily. Monomer. Zn(2+) is required as a cofactor.

It is found in the cytoplasm. It carries out the reaction tRNA(Glu) + L-glutamate + ATP = L-glutamyl-tRNA(Glu) + AMP + diphosphate. Functionally, catalyzes the attachment of glutamate to tRNA(Glu) in a two-step reaction: glutamate is first activated by ATP to form Glu-AMP and then transferred to the acceptor end of tRNA(Glu). The chain is Glutamate--tRNA ligase from Mannheimia succiniciproducens (strain KCTC 0769BP / MBEL55E).